We begin with the raw amino-acid sequence, 509 residues long: 3-isopropylmalate dehydratase large subunit, chloroplastic (509 aa).

Positions 1–24 (MASVISSSPFLCKSSSKSDLGISS) are enriched in low complexity. The interval 1-25 (MASVISSSPFLCKSSSKSDLGISSF) is disordered. A chloroplast-targeting transit peptide spans 1–47 (MASVISSSPFLCKSSSKSDLGISSFPKSSQISIHRCQKKSISRKIVS). Residues C376, C445, and C448 each contribute to the [4Fe-4S] cluster site.

Belongs to the aconitase/IPM isomerase family. In terms of assembly, heterodimer of the large LEUC/IIL1 subunit and the small LEUD (SSU1, SSU2 or SSU3) subunits. [4Fe-4S] cluster is required as a cofactor. As to expression, expressed in roots, leaves, stems and flowers. Expressed at low levels in siliques.

The protein localises to the plastid. The protein resides in the chloroplast stroma. It catalyses the reaction (2R,3S)-3-isopropylmalate = (2S)-2-isopropylmalate. The enzyme catalyses a 2-(omega-methylsulfanyl)alkylmalate = a 2-(omega-methylsulfanyl)alkylmaleate + H2O. The catalysed reaction is 2-(3-methylsulfanyl)propylmalate = 2-(2-methylsulfanyl)propylmaleate + H2O. It carries out the reaction a 3-(omega-methylsulfanyl)alkylmalate = a 2-(omega-methylsulfanyl)alkylmaleate + H2O. It catalyses the reaction 2-(2-methylsulfanyl)ethylmalate = 2-(2-methylsulfanyl)ethylmaleate + H2O. The enzyme catalyses 3-(2-methylsulfanyl)ethylmalate = 2-(2-methylsulfanyl)ethylmaleate + H2O. The catalysed reaction is 3-(3-methylsulfanyl)propylmalate = 2-(2-methylsulfanyl)propylmaleate + H2O. It participates in amino-acid biosynthesis; L-leucine biosynthesis; L-leucine from 3-methyl-2-oxobutanoate: step 2/4. Its function is as follows. Catalyzes the isomerization between 2-isopropylmalate and 3-isopropylmalate, via the formation of 2-isopropylmaleate. Functions in both the biosynthesis of leucine and in the methionine chain elongation pathway of aliphatic glucosinolate formation. The chain is 3-isopropylmalate dehydratase large subunit, chloroplastic from Arabidopsis thaliana (Mouse-ear cress).